We begin with the raw amino-acid sequence, 99 residues long: Putative pterin-4-alpha-carbinolamine dehydratase (99 aa).

Belongs to the pterin-4-alpha-carbinolamine dehydratase family.

The catalysed reaction is (4aS,6R)-4a-hydroxy-L-erythro-5,6,7,8-tetrahydrobiopterin = (6R)-L-erythro-6,7-dihydrobiopterin + H2O. The protein is Putative pterin-4-alpha-carbinolamine dehydratase of Saccharolobus islandicus (strain M.16.27) (Sulfolobus islandicus).